The primary structure comprises 268 residues: Ribosomal RNA small subunit methyltransferase A (268 aa).

The S-adenosyl-L-methionine site is built by Asn-16, Leu-18, Gly-43, Glu-64, Asp-89, and Asn-110.

Belongs to the class I-like SAM-binding methyltransferase superfamily. rRNA adenine N(6)-methyltransferase family. RsmA subfamily.

Its subcellular location is the cytoplasm. The catalysed reaction is adenosine(1518)/adenosine(1519) in 16S rRNA + 4 S-adenosyl-L-methionine = N(6)-dimethyladenosine(1518)/N(6)-dimethyladenosine(1519) in 16S rRNA + 4 S-adenosyl-L-homocysteine + 4 H(+). Its function is as follows. Specifically dimethylates two adjacent adenosines (A1518 and A1519) in the loop of a conserved hairpin near the 3'-end of 16S rRNA in the 30S particle. May play a critical role in biogenesis of 30S subunits. The chain is Ribosomal RNA small subunit methyltransferase A from Pseudomonas syringae pv. tomato (strain ATCC BAA-871 / DC3000).